The chain runs to 1204 residues: Erythroid differentiation-related factor 1 (1204 aa).

Disordered stretches follow at residues 1–30 (MGDA…QAES), 220–264 (QPVS…ASSQ), 483–527 (PKKE…SDDS), and 586–613 (KKES…RGGP). 3 stretches are compositionally biased toward low complexity: residues 9-30 (AEGP…QAES), 223-241 (SSTT…NDSE), and 253-263 (SSVSEDPSASS). The span at 496–513 (NSDESYSEEEEEMPDSDE) shows a compositional bias: acidic residues. TPR repeat units follow at residues 693–726 (CCLC…QNAN) and 920–953 (DIHP…LSRK).

The protein localises to the nucleus. Functionally, transcription factor involved in erythroid differentiation. Involved in transcriptional activation of the globin gene. The chain is Erythroid differentiation-related factor 1 (EDRF1) from Pongo abelii (Sumatran orangutan).